We begin with the raw amino-acid sequence, 789 residues long: 1-phosphatidylinositol 4,5-bisphosphate phosphodiesterase delta-3 (789 aa).

Residues 63–172 (RAMLRGSRLR…WVRGLTKLRA (110 aa)) form the PH domain. Residues 73 to 101 (KIRSRTWHKERLYRLQEDGLSVWFQRRIP) are substrate binding. Serine 105 is modified (phosphoserine). 3 consecutive EF-hand domains span residues 182-217 (RLDH…VNVD), 218-253 (MNDM…LLKR), and 250-285 (LLKR…QGEE). Ca(2+) contacts are provided by aspartate 195, asparagine 197, aspartate 199, lysine 201, glutamate 206, aspartate 231, serine 233, asparagine 235, arginine 237, and glutamate 242. The region spanning 337–482 (QDMNQPLAHY…LKGRVLVKGK (146 aa)) is the PI-PLC X-box domain. Histidine 352 is an active-site residue. Ca(2+) is bound by residues asparagine 353, glutamate 382, and aspartate 384. Residue histidine 397 is part of the active site. A Ca(2+)-binding site is contributed by glutamate 431. Residues 461-519 (SPNPEELPSPEQLKGRVLVKGKKLPAARSEDGRALSDREEEEEDDEEEEEEVEAAAQRR) are disordered. Positions 480 and 482 each coordinate substrate. A compositionally biased stretch (basic and acidic residues) spans 488–497 (RSEDGRALSD). Phosphoserine is present on serine 496. The span at 498 to 513 (REEEEEDDEEEEEEVE) shows a compositional bias: acidic residues. Positions 528–644 (LSALAVYCHA…GYVLKPACLR (117 aa)) constitute a PI-PLC Y-box domain. Serine 557 is a substrate binding site. At serine 573 the chain carries Phosphoserine. Arginine 584 lines the substrate pocket. The C2 domain occupies 644-769 (RQPDSTFDPE…QGYRHIHLLS (126 aa)). The Ca(2+) site is built by isoleucine 683, aspartate 685, asparagine 709, aspartate 738, tyrosine 739, and aspartate 740.

The cofactor is Ca(2+). As to expression, present in corneal epithelial cells (at protein level).

The protein resides in the membrane. It localises to the cytoplasm. Its subcellular location is the cleavage furrow. The catalysed reaction is a 1,2-diacyl-sn-glycero-3-phospho-(1D-myo-inositol-4,5-bisphosphate) + H2O = 1D-myo-inositol 1,4,5-trisphosphate + a 1,2-diacyl-sn-glycerol + H(+). Strongly activated by phosphatidic acid. Inhibited by phosphatidylethanolamine (PtdEtn), phosphatidylcholine (PtdCho), sphingomyelin and phosphatidylserine (PtdSer). Its function is as follows. Hydrolyzes the phosphatidylinositol 4,5-bisphosphate (PIP2) to generate 2 second messenger molecules diacylglycerol (DAG) and inositol 1,4,5-trisphosphate (IP3). DAG mediates the activation of protein kinase C (PKC), while IP3 releases Ca(2+) from intracellular stores. Essential for trophoblast and placental development. May participate in cytokinesis by hydrolyzing PIP2 at the cleavage furrow. Regulates neurite outgrowth through the inhibition of RhoA/Rho kinase signaling. The chain is 1-phosphatidylinositol 4,5-bisphosphate phosphodiesterase delta-3 from Homo sapiens (Human).